A 450-amino-acid chain; its full sequence is ATP-dependent protease ATPase subunit HslU (450 aa).

ATP-binding positions include Val-27, 69–74 (GVGKTE), Asp-263, Glu-328, and Arg-400.

This sequence belongs to the ClpX chaperone family. HslU subfamily. In terms of assembly, a double ring-shaped homohexamer of HslV is capped on each side by a ring-shaped HslU homohexamer. The assembly of the HslU/HslV complex is dependent on binding of ATP.

It is found in the cytoplasm. In terms of biological role, ATPase subunit of a proteasome-like degradation complex; this subunit has chaperone activity. The binding of ATP and its subsequent hydrolysis by HslU are essential for unfolding of protein substrates subsequently hydrolyzed by HslV. HslU recognizes the N-terminal part of its protein substrates and unfolds these before they are guided to HslV for hydrolysis. The sequence is that of ATP-dependent protease ATPase subunit HslU from Aquifex aeolicus (strain VF5).